The primary structure comprises 787 residues: LPS-assembly protein LptD (787 aa).

A signal peptide spans 1-24; the sequence is MKKSFPTLLATLVWSALYSQHALA.

This sequence belongs to the LptD family. In terms of assembly, component of the lipopolysaccharide transport and assembly complex. Interacts with LptE and LptA.

It localises to the cell outer membrane. Together with LptE, is involved in the assembly of lipopolysaccharide (LPS) at the surface of the outer membrane. This Pectobacterium atrosepticum (strain SCRI 1043 / ATCC BAA-672) (Erwinia carotovora subsp. atroseptica) protein is LPS-assembly protein LptD.